The chain runs to 309 residues: Assembly-complementing factor 4 (309 aa).

Disordered stretches follow at residues 1–80 (MSED…ASPI), 164–240 (KSIN…ENTP), and 286–309 (VRSE…LFKR). Composition is skewed to basic and acidic residues over residues 13 to 24 (ELHKLSIVDKHS) and 34 to 44 (KQHEVQPESKS). Phosphoserine occurs at positions 44, 71, 74, 78, and 165. Over residues 61-80 (SSPQRSTTNQSPVSDHASPI) the composition is skewed to polar residues. 3 stretches are compositionally biased toward low complexity: residues 174–188 (NNNV…LPNR), 205–214 (PSRSSESTPT), and 222–239 (PRNT…GENT). The span at 287–298 (RSEDEDDEEFEP) shows a compositional bias: acidic residues. Ser-288 bears the Phosphoserine mark.

Its function is as follows. May be involved in actin cytoskeleton organization and biogenesis. This is Assembly-complementing factor 4 (ACF4) from Saccharomyces cerevisiae (strain ATCC 204508 / S288c) (Baker's yeast).